Here is a 578-residue protein sequence, read N- to C-terminus: Rhamnogalacturonate lyase (578 aa).

The first 27 residues, 1–27 (MHMNKPLQAWRTPLLTLIFVLPLTATG), serve as a signal peptide directing secretion.

The protein belongs to the polysaccharide lyase 4 family.

It localises to the secreted. The catalysed reaction is Endotype eliminative cleavage of L-alpha-rhamnopyranosyl-(1-&gt;4)-alpha-D-galactopyranosyluronic acid bonds of rhamnogalacturonan I domains in ramified hairy regions of pectin leaving L-rhamnopyranose at the reducing end and 4-deoxy-4,5-unsaturated D-galactopyranosyluronic acid at the non-reducing end.. In terms of biological role, degrades the rhamnogalacturonan I (RG-I) backbone of pectin. Is required for the full virulence of E.chrysanthemi strain 3937 as it is involved in rotting of plant tissue. This is Rhamnogalacturonate lyase (rhiE) from Dickeya dadantii (strain 3937) (Erwinia chrysanthemi (strain 3937)).